Reading from the N-terminus, the 400-residue chain is Methylthioribose kinase (400 aa).

ATP-binding positions include Asn44, Lys61, and 115 to 117 (EDL). Substrate is bound at residue Asp233. An ATP-binding site is contributed by 250–252 (DPE). Arg340 contributes to the substrate binding site.

This sequence belongs to the methylthioribose kinase family. In terms of assembly, homodimer.

The catalysed reaction is 5-(methylsulfanyl)-D-ribose + ATP = 5-(methylsulfanyl)-alpha-D-ribose 1-phosphate + ADP + H(+). The protein operates within amino-acid biosynthesis; L-methionine biosynthesis via salvage pathway; S-methyl-5-thio-alpha-D-ribose 1-phosphate from S-methyl-5'-thioadenosine (hydrolase route): step 2/2. Catalyzes the phosphorylation of methylthioribose into methylthioribose-1-phosphate. This is Methylthioribose kinase from Geobacillus sp. (strain WCH70).